A 166-amino-acid chain; its full sequence is Large ribosomal subunit protein uL10 (166 aa).

It belongs to the universal ribosomal protein uL10 family. In terms of assembly, part of the ribosomal stalk of the 50S ribosomal subunit. The N-terminus interacts with L11 and the large rRNA to form the base of the stalk. The C-terminus forms an elongated spine to which L12 dimers bind in a sequential fashion forming a multimeric L10(L12)X complex.

Its function is as follows. Forms part of the ribosomal stalk, playing a central role in the interaction of the ribosome with GTP-bound translation factors. In Streptococcus pneumoniae (strain ATCC 700669 / Spain 23F-1), this protein is Large ribosomal subunit protein uL10.